A 648-amino-acid polypeptide reads, in one-letter code: Beta-glucuronidase (648 aa).

Residues 1–22 (MSPRRSVCWFVLGQLLCSCAVA) form the signal peptide. Asn172 and Asn416 each carry an N-linked (GlcNAc...) asparagine glycan. Glu447 functions as the Proton donor in the catalytic mechanism. Asn627 carries an N-linked (GlcNAc...) asparagine glycan.

It belongs to the glycosyl hydrolase 2 family. In terms of assembly, homotetramer. Undergoes a post-transcriptional proteolytic cleavage near its C-terminal end, which reduces its size by approximately 3 kDa. The site of this cleavage has as yet not been determined.

The protein localises to the lysosome. The enzyme catalyses a beta-D-glucuronoside + H2O = D-glucuronate + an alcohol. Inhibited by L-aspartic acid. Its function is as follows. Plays an important role in the degradation of dermatan and keratan sulfates. The protein is Beta-glucuronidase (Gusb) of Rattus norvegicus (Rat).